Reading from the N-terminus, the 163-residue chain is NADH-quinone oxidoreductase subunit I (163 aa).

4Fe-4S ferredoxin-type domains follow at residues 53–83 and 94–123; these read LRRY…IEAG and VRYD…EGPN. Residues cysteine 63, cysteine 66, cysteine 69, cysteine 73, cysteine 103, cysteine 106, cysteine 109, and cysteine 113 each contribute to the [4Fe-4S] cluster site.

This sequence belongs to the complex I 23 kDa subunit family. In terms of assembly, NDH-1 is composed of 14 different subunits. Subunits NuoA, H, J, K, L, M, N constitute the membrane sector of the complex. [4Fe-4S] cluster serves as cofactor.

It is found in the cell inner membrane. The enzyme catalyses a quinone + NADH + 5 H(+)(in) = a quinol + NAD(+) + 4 H(+)(out). NDH-1 shuttles electrons from NADH, via FMN and iron-sulfur (Fe-S) centers, to quinones in the respiratory chain. The immediate electron acceptor for the enzyme in this species is believed to be ubiquinone. Couples the redox reaction to proton translocation (for every two electrons transferred, four hydrogen ions are translocated across the cytoplasmic membrane), and thus conserves the redox energy in a proton gradient. The protein is NADH-quinone oxidoreductase subunit I of Bartonella henselae (strain ATCC 49882 / DSM 28221 / CCUG 30454 / Houston 1) (Rochalimaea henselae).